A 353-amino-acid chain; its full sequence is Methionine import ATP-binding protein MetN (353 aa).

The 241-residue stretch at 11–251 (ITFDRVEKSF…PEHPTTRSFL (241 aa)) folds into the ABC transporter domain. 48-55 (GRSGAGKS) is an ATP binding site.

It belongs to the ABC transporter superfamily. Methionine importer (TC 3.A.1.24) family. As to quaternary structure, the complex is composed of two ATP-binding proteins (MetN), two transmembrane proteins (MetI) and a solute-binding protein (MetQ).

The protein localises to the cell inner membrane. It catalyses the reaction L-methionine(out) + ATP + H2O = L-methionine(in) + ADP + phosphate + H(+). The enzyme catalyses D-methionine(out) + ATP + H2O = D-methionine(in) + ADP + phosphate + H(+). In terms of biological role, part of the ABC transporter complex MetNIQ involved in methionine import. Responsible for energy coupling to the transport system. In Cereibacter sphaeroides (strain ATCC 17023 / DSM 158 / JCM 6121 / CCUG 31486 / LMG 2827 / NBRC 12203 / NCIMB 8253 / ATH 2.4.1.) (Rhodobacter sphaeroides), this protein is Methionine import ATP-binding protein MetN.